Consider the following 353-residue polypeptide: Photosystem II protein D1 (353 aa).

N-acetylthreonine is present on T2. Phosphothreonine is present on T2. 3 helical membrane passes run 29–46, 118–133, and 142–156; these read YIGW…TATS, HFFI…EWEL, and WIAV…AATA. A chlorophyll a-binding site is contributed by H118. Y126 is a pheophytin a binding site. [CaMn4O5] cluster is bound by residues D170 and E189. A helical transmembrane segment spans residues 197 to 218; sequence FHMLGVAGVFGGSLFSAMHGSL. H198 lines the chlorophyll a pocket. Residues H215 and 264-265 each bind a quinone; that span reads SF. H215 serves as a coordination point for Fe cation. H272 contributes to the Fe cation binding site. Residues 274-288 traverse the membrane as a helical segment; that stretch reads FLAIWPVVGIWFTAL. H332, E333, D342, and A344 together coordinate [CaMn4O5] cluster. A propeptide spanning residues 345–353 is cleaved from the precursor; that stretch reads SVEAPSING.

It belongs to the reaction center PufL/M/PsbA/D family. In terms of assembly, PSII is composed of 1 copy each of membrane proteins PsbA, PsbB, PsbC, PsbD, PsbE, PsbF, PsbH, PsbI, PsbJ, PsbK, PsbL, PsbM, PsbT, PsbX, PsbY, PsbZ, Psb30/Ycf12, at least 3 peripheral proteins of the oxygen-evolving complex and a large number of cofactors. It forms dimeric complexes. The D1/D2 heterodimer binds P680, chlorophylls that are the primary electron donor of PSII, and subsequent electron acceptors. It shares a non-heme iron and each subunit binds pheophytin, quinone, additional chlorophylls, carotenoids and lipids. D1 provides most of the ligands for the Mn4-Ca-O5 cluster of the oxygen-evolving complex (OEC). There is also a Cl(-1) ion associated with D1 and D2, which is required for oxygen evolution. The PSII complex binds additional chlorophylls, carotenoids and specific lipids. serves as cofactor. In terms of processing, tyr-161 forms a radical intermediate that is referred to as redox-active TyrZ, YZ or Y-Z. C-terminally processed by CTPA; processing is essential to allow assembly of the oxygen-evolving complex and thus photosynthetic growth.

The protein resides in the plastid. Its subcellular location is the chloroplast thylakoid membrane. The catalysed reaction is 2 a plastoquinone + 4 hnu + 2 H2O = 2 a plastoquinol + O2. Its function is as follows. Photosystem II (PSII) is a light-driven water:plastoquinone oxidoreductase that uses light energy to abstract electrons from H(2)O, generating O(2) and a proton gradient subsequently used for ATP formation. It consists of a core antenna complex that captures photons, and an electron transfer chain that converts photonic excitation into a charge separation. The D1/D2 (PsbA/PsbD) reaction center heterodimer binds P680, the primary electron donor of PSII as well as several subsequent electron acceptors. This chain is Photosystem II protein D1, found in Stigeoclonium helveticum (Green alga).